The sequence spans 436 residues: MLDTNLLFNHFEWVAKKLARKNFVLNFDELNQYNDLRKILQKKIEKLQIDRKNLSKTIILAKSQQINLQSLQKQARLLNQKLILIKSEIRTLKSKIKQYQLSIPNIPDDEIPNGFKDQDNIEIMRWGKVHKYDFKLLDHITLGKLIGGIDLSSASKITGTRFIILKGEIAYLHRALSQFMIDIHIQNHGYIEYYLPYLINVESLYGSGQLPKFYDDLFHTQSVVSVNSSKCSTYTLIPTAEVPLVNIMRSVTVHKNELPIKMVAHTPCFRLEAGTYGYRAHGLIRTHQFDKVELVQVVHPDQSVQALEEITNHAEKILQLLELPYRKMLLCAGNISFTSCKTYDLEVWLPARNEYCEISSCSNIRDFQSRRINARFKDGINKRSKLLHTLNASGVAVGRALVAILENYQLENGCIKIPEVLSPYMNGMTHIHYQNK.

Position 239–241 (239–241 (TAE)) interacts with L-serine. Position 270–272 (270–272 (RLE)) interacts with ATP. Residue Glu293 participates in L-serine binding. 357–360 (EISS) is an ATP binding site. Residue Ser393 coordinates L-serine.

It belongs to the class-II aminoacyl-tRNA synthetase family. Type-1 seryl-tRNA synthetase subfamily. Homodimer. The tRNA molecule binds across the dimer.

It is found in the cytoplasm. It catalyses the reaction tRNA(Ser) + L-serine + ATP = L-seryl-tRNA(Ser) + AMP + diphosphate + H(+). The catalysed reaction is tRNA(Sec) + L-serine + ATP = L-seryl-tRNA(Sec) + AMP + diphosphate + H(+). The protein operates within aminoacyl-tRNA biosynthesis; selenocysteinyl-tRNA(Sec) biosynthesis; L-seryl-tRNA(Sec) from L-serine and tRNA(Sec): step 1/1. Functionally, catalyzes the attachment of serine to tRNA(Ser). Is also able to aminoacylate tRNA(Sec) with serine, to form the misacylated tRNA L-seryl-tRNA(Sec), which will be further converted into selenocysteinyl-tRNA(Sec). The protein is Serine--tRNA ligase of Blochmanniella floridana.